The following is a 114-amino-acid chain: Hydrogenase maturation factor HypA (114 aa).

Residue H2 participates in Ni(2+) binding. Positions 74, 77, 90, and 93 each coordinate Zn(2+).

This sequence belongs to the HypA/HybF family.

Functionally, involved in the maturation of [NiFe] hydrogenases. Required for nickel insertion into the metal center of the hydrogenase. The sequence is that of Hydrogenase maturation factor HypA from Campylobacter jejuni subsp. jejuni serotype O:2 (strain ATCC 700819 / NCTC 11168).